The sequence spans 118 residues: MIEALLVATGGFFGAITRFAISNWLKKRNKTQFPIATFLINITGAFLLGYIIGSGVTTGWQLLLGTGFMGAFTTFSTFKLESVQLLNRKNFSTFLLYLSATYIVGILFAFLGMKLGGI.

4 helical membrane passes run 1 to 21 (MIEA…RFAI), 33 to 53 (FPIA…YIIG), 55 to 75 (GVTT…FTTF), and 93 to 113 (TFLL…FLGM). Positions 70 and 73 each coordinate Na(+).

It belongs to the fluoride channel Fluc/FEX (TC 1.A.43) family.

It is found in the cell membrane. It carries out the reaction fluoride(in) = fluoride(out). Na(+) is not transported, but it plays an essential structural role and its presence is essential for fluoride channel function. In terms of biological role, fluoride-specific ion channel. Important for reducing fluoride concentration in the cell, thus reducing its toxicity. The polypeptide is Fluoride-specific ion channel FluC 2 (Bacillus thuringiensis subsp. konkukian (strain 97-27)).